The sequence spans 314 residues: Methionyl-tRNA formyltransferase (314 aa).

111–114 (SLLP) contacts (6S)-5,6,7,8-tetrahydrofolate.

Belongs to the Fmt family.

The catalysed reaction is L-methionyl-tRNA(fMet) + (6R)-10-formyltetrahydrofolate = N-formyl-L-methionyl-tRNA(fMet) + (6S)-5,6,7,8-tetrahydrofolate + H(+). Functionally, attaches a formyl group to the free amino group of methionyl-tRNA(fMet). The formyl group appears to play a dual role in the initiator identity of N-formylmethionyl-tRNA by promoting its recognition by IF2 and preventing the misappropriation of this tRNA by the elongation apparatus. In Coxiella burnetii (strain CbuG_Q212) (Coxiella burnetii (strain Q212)), this protein is Methionyl-tRNA formyltransferase.